The primary structure comprises 306 residues: 2-phospho-L-lactate transferase (306 aa).

D48 lines the 7,8-didemethyl-8-hydroxy-5-deazariboflavin pocket.

It belongs to the CofD family. Homodimer. Mg(2+) is required as a cofactor.

It catalyses the reaction (2S)-lactyl-2-diphospho-5'-guanosine + 7,8-didemethyl-8-hydroxy-5-deazariboflavin = oxidized coenzyme F420-0 + GMP + H(+). It functions in the pathway cofactor biosynthesis; coenzyme F420 biosynthesis. Functionally, catalyzes the transfer of the 2-phospholactate moiety from (2S)-lactyl-2-diphospho-5'-guanosine to 7,8-didemethyl-8-hydroxy-5-deazariboflavin (FO) with the formation of oxidized coenzyme F420-0 and GMP. The chain is 2-phospho-L-lactate transferase from Methanococcoides burtonii (strain DSM 6242 / NBRC 107633 / OCM 468 / ACE-M).